Reading from the N-terminus, the 85-residue chain is Large ribosomal subunit protein bL27 (85 aa).

The disordered stretch occupies residues 1 to 22 (MAHKKGQGSSRNGRDSPGQRRG).

The protein belongs to the bacterial ribosomal protein bL27 family.

This Anaeromyxobacter dehalogenans (strain 2CP-1 / ATCC BAA-258) protein is Large ribosomal subunit protein bL27.